Reading from the N-terminus, the 235-residue chain is 7-cyano-7-deazaguanine synthase (235 aa).

Residue 10-20 (FSGGQDSTTCL) coordinates ATP. Zn(2+)-binding residues include Cys198, Cys213, Cys216, and Cys219.

Belongs to the QueC family. Zn(2+) serves as cofactor.

It carries out the reaction 7-carboxy-7-deazaguanine + NH4(+) + ATP = 7-cyano-7-deazaguanine + ADP + phosphate + H2O + H(+). It participates in purine metabolism; 7-cyano-7-deazaguanine biosynthesis. In terms of biological role, catalyzes the ATP-dependent conversion of 7-carboxy-7-deazaguanine (CDG) to 7-cyano-7-deazaguanine (preQ(0)). This Paracidovorax citrulli (strain AAC00-1) (Acidovorax citrulli) protein is 7-cyano-7-deazaguanine synthase.